A 174-amino-acid polypeptide reads, in one-letter code: ATP synthase subunit delta (174 aa).

This sequence belongs to the ATPase delta chain family. As to quaternary structure, F-type ATPases have 2 components, F(1) - the catalytic core - and F(0) - the membrane proton channel. F(1) has five subunits: alpha(3), beta(3), gamma(1), delta(1), epsilon(1). F(0) has three main subunits: a(1), b(2) and c(10-14). The alpha and beta chains form an alternating ring which encloses part of the gamma chain. F(1) is attached to F(0) by a central stalk formed by the gamma and epsilon chains, while a peripheral stalk is formed by the delta and b chains.

The protein resides in the cell inner membrane. In terms of biological role, f(1)F(0) ATP synthase produces ATP from ADP in the presence of a proton or sodium gradient. F-type ATPases consist of two structural domains, F(1) containing the extramembraneous catalytic core and F(0) containing the membrane proton channel, linked together by a central stalk and a peripheral stalk. During catalysis, ATP synthesis in the catalytic domain of F(1) is coupled via a rotary mechanism of the central stalk subunits to proton translocation. This protein is part of the stalk that links CF(0) to CF(1). It either transmits conformational changes from CF(0) to CF(1) or is implicated in proton conduction. The chain is ATP synthase subunit delta from Fusobacterium nucleatum subsp. nucleatum (strain ATCC 25586 / DSM 15643 / BCRC 10681 / CIP 101130 / JCM 8532 / KCTC 2640 / LMG 13131 / VPI 4355).